A 97-amino-acid polypeptide reads, in one-letter code: Co-chaperonin GroES (97 aa).

This sequence belongs to the GroES chaperonin family. Heptamer of 7 subunits arranged in a ring. Interacts with the chaperonin GroEL.

The protein localises to the cytoplasm. Its function is as follows. Together with the chaperonin GroEL, plays an essential role in assisting protein folding. The GroEL-GroES system forms a nano-cage that allows encapsulation of the non-native substrate proteins and provides a physical environment optimized to promote and accelerate protein folding. GroES binds to the apical surface of the GroEL ring, thereby capping the opening of the GroEL channel. In Buchnera aphidicola subsp. Pterocomma populeum, this protein is Co-chaperonin GroES.